We begin with the raw amino-acid sequence, 549 residues long: Chaperonin GroEL (549 aa).

Residues 30–33 (TLGP), lysine 51, 87–91 (DGTTT), glycine 415, and aspartate 497 each bind ATP.

It belongs to the chaperonin (HSP60) family. As to quaternary structure, forms a cylinder of 14 subunits composed of two heptameric rings stacked back-to-back. Interacts with the co-chaperonin GroES.

The protein localises to the cytoplasm. The catalysed reaction is ATP + H2O + a folded polypeptide = ADP + phosphate + an unfolded polypeptide.. Functionally, together with its co-chaperonin GroES, plays an essential role in assisting protein folding. The GroEL-GroES system forms a nano-cage that allows encapsulation of the non-native substrate proteins and provides a physical environment optimized to promote and accelerate protein folding. The polypeptide is Chaperonin GroEL (Pectobacterium atrosepticum (strain SCRI 1043 / ATCC BAA-672) (Erwinia carotovora subsp. atroseptica)).